The sequence spans 708 residues: ATP-dependent DNA helicase Hel308 (708 aa).

Residues glutamine 28 and threonine 46 to serine 53 contribute to the ATP site. The 166-residue stretch at arginine 33–serine 198 folds into the Helicase ATP-binding domain. Residues aspartate 143–histidine 146 carry the DEAH box motif. Positions glutamate 231–glycine 429 constitute a Helicase C-terminal domain.

It belongs to the helicase family. Hel308 subfamily. In terms of assembly, monomer.

It carries out the reaction Couples ATP hydrolysis with the unwinding of duplex DNA by translocating in the 3'-5' direction.. It catalyses the reaction ATP + H2O = ADP + phosphate + H(+). Functionally, DNA-dependent ATPase and 3'-5' DNA helicase that may be involved in repair of stalled replication forks. This chain is ATP-dependent DNA helicase Hel308, found in Pyrobaculum calidifontis (strain DSM 21063 / JCM 11548 / VA1).